Here is a 347-residue protein sequence, read N- to C-terminus: NADH-quinone oxidoreductase subunit H (347 aa).

Transmembrane regions (helical) follow at residues 13–33 (LIMI…IAYI), 82–102 (AVFL…WAVV), 115–135 (VGIL…IMGG), 161–181 (IGLV…TDIV), 198–218 (FLDW…ISAL), 258–278 (AVVL…LPPV), 286–306 (VPGI…FAMV), and 321–341 (LGWK…AFVL).

This sequence belongs to the complex I subunit 1 family. In terms of assembly, NDH-1 is composed of 14 different subunits. Subunits NuoA, H, J, K, L, M, N constitute the membrane sector of the complex.

The protein resides in the cell inner membrane. The enzyme catalyses a quinone + NADH + 5 H(+)(in) = a quinol + NAD(+) + 4 H(+)(out). Functionally, NDH-1 shuttles electrons from NADH, via FMN and iron-sulfur (Fe-S) centers, to quinones in the respiratory chain. The immediate electron acceptor for the enzyme in this species is believed to be ubiquinone. Couples the redox reaction to proton translocation (for every two electrons transferred, four hydrogen ions are translocated across the cytoplasmic membrane), and thus conserves the redox energy in a proton gradient. This subunit may bind ubiquinone. The chain is NADH-quinone oxidoreductase subunit H from Rhizobium rhizogenes (strain K84 / ATCC BAA-868) (Agrobacterium radiobacter).